The following is a 501-amino-acid chain: uncharacterized protein (501 aa).

7 helical membrane-spanning segments follow: residues 14-34 (AIFIIPFWILSIALWFSSGSV), 73-93 (FILFQIIPINILCFLPLLGYM), 111-131 (IFGIMMLITIPLFLIVSICIF), 197-217 (FIIATIVFSFSMLVIVLVLLI), 274-294 (ILLSIFQLFYIGSYFSLYYFG), 297-317 (FNLIPFFINLIILFISYYNLI), and 466-486 (FLVLIGLSGLFNILYLKRLIL).

The protein resides in the membrane. This is an uncharacterized protein from Dictyostelium discoideum (Social amoeba).